The chain runs to 362 residues: Probable dual-specificity RNA methyltransferase RlmN (362 aa).

Glu-99 (proton acceptor) is an active-site residue. The Radical SAM core domain occupies 105-341 (SPDRHTVCVS…VTVRKSQGAS (237 aa)). A disulfide bridge connects residues Cys-112 and Cys-346. Residues Cys-119, Cys-123, and Cys-126 each coordinate [4Fe-4S] cluster. S-adenosyl-L-methionine is bound by residues 171 to 172 (GE), Ser-204, 227 to 229 (SLH), and Asn-303. Cys-346 functions as the S-methylcysteine intermediate in the catalytic mechanism.

It belongs to the radical SAM superfamily. RlmN family. The cofactor is [4Fe-4S] cluster.

Its subcellular location is the cytoplasm. The catalysed reaction is adenosine(2503) in 23S rRNA + 2 reduced [2Fe-2S]-[ferredoxin] + 2 S-adenosyl-L-methionine = 2-methyladenosine(2503) in 23S rRNA + 5'-deoxyadenosine + L-methionine + 2 oxidized [2Fe-2S]-[ferredoxin] + S-adenosyl-L-homocysteine. The enzyme catalyses adenosine(37) in tRNA + 2 reduced [2Fe-2S]-[ferredoxin] + 2 S-adenosyl-L-methionine = 2-methyladenosine(37) in tRNA + 5'-deoxyadenosine + L-methionine + 2 oxidized [2Fe-2S]-[ferredoxin] + S-adenosyl-L-homocysteine. In terms of biological role, specifically methylates position 2 of adenine 2503 in 23S rRNA and position 2 of adenine 37 in tRNAs. The polypeptide is Probable dual-specificity RNA methyltransferase RlmN (Chlorobium phaeobacteroides (strain BS1)).